The sequence spans 147 residues: Large ribosomal subunit protein uL13 (147 aa).

This sequence belongs to the universal ribosomal protein uL13 family. As to quaternary structure, part of the 50S ribosomal subunit.

Its function is as follows. This protein is one of the early assembly proteins of the 50S ribosomal subunit, although it is not seen to bind rRNA by itself. It is important during the early stages of 50S assembly. The chain is Large ribosomal subunit protein uL13 from Latilactobacillus sakei subsp. sakei (strain 23K) (Lactobacillus sakei subsp. sakei).